The chain runs to 1423 residues: Autophagy-related protein 11 (1423 aa).

2 coiled-coil regions span residues 551 to 589 (DDELLRSLQDDKSKLESKLKTAESRVRRLEDLLHRQSQA) and 625 to 978 (SEGT…ASEL). Disordered regions lie at residues 583–660 (LHRQ…SNRA) and 1028–1048 (RAERAAQNPNDSSDPGTSLRK). Polar residues predominate over residues 585-602 (RQSQASRPGNLFQPQTNS). The segment covering 631–648 (LLRRISELENELREEKQR) has biased composition (basic and acidic residues). Composition is skewed to polar residues over residues 650-660 (SRIQNDLSNRA) and 1034-1047 (QNPNDSSDPGTSLR). The stretch at 1102–1130 (HRIKEVEHKARKWQKEARSYRDRAHIAQK) forms a coiled coil. Residues 1327–1423 (SLRAAAPETP…DYTYESPGKK (97 aa)) form a disordered region. Residues 1383–1395 (KTAEPRRMLDRQE) show a composition bias toward basic and acidic residues.

This sequence belongs to the ATG11 family. In terms of assembly, homodimer and potential homooligomers. Interacts with ATG1 kinase and the ATG19 and ATG34 cargo protein transporters. Interacts with ATG9, ATG17 and ATG20.

Its subcellular location is the preautophagosomal structure membrane. The protein resides in the vacuole membrane. Functionally, involved in cytoplasm to vacuole transport (Cvt), pexophagy, mitophagy and nucleophagy. Recruits mitochondria for their selective degradation via autophagy (mitophagy) during starvation, through its interaction with ATG32. Works as scaffold proteins that recruit ATG proteins to the pre-autophagosome (PAS), the site of vesicle/autophagosome formation. Required for ATG9 anterograde transport from the mitochondria to the PAS. Also recruits the ATG19-prAPE1 complex to the PAS. Required for the Cvt vesicles completion. Plays a role in morphological differentiation and cephalosporin production. This Hapsidospora chrysogena (Acremonium chrysogenum) protein is Autophagy-related protein 11.